The chain runs to 375 residues: MQKLQISVYIYLFMLIVAGPVDLNEKSEQKENVEKEGLCNACLWRENTTSSRLEAIKIQILSKLRLETAPNISKDAIRQLLPKAPPLLELIDQFDVQGDASSDGSLEDDDYHARTETVITMPTESDLLTQVEGKPKCCFFKFSSKIQYNKLVKAQLWIYLRPVKTPTTVFAQILRLIKPMKDGTRYTGIRSLKLDMNPGTGIWQSIDVKTVLQNWLKQPESNLGIEIKALDENGRDLAVTFPEPGEDGLTPFLEVKVTDTPKRSRRDFGLDCDEHSTESRCCRYPLTVDFEAFGWDWIIAPKRYKANYCSGECEFVFLQKYPHTHLVHQANPRGSAGPCCTPTKMSPINMLYFNGEGQIIYGKIPAMVVDRCGCS.

The signal sequence occupies residues 1 to 18; it reads MQKLQISVYIYLFMLIVA. Residues 19–266 constitute a propeptide that is removed on maturation; sequence GPVDLNEKSE…VTDTPKRSRR (248 aa). Asn47 and Asn71 each carry an N-linked (GlcNAc...) asparagine glycan. Intrachain disulfides connect Cys272–Cys282, Cys281–Cys340, Cys309–Cys372, and Cys313–Cys374.

This sequence belongs to the TGF-beta family. As to quaternary structure, homodimer; disulfide-linked. Interacts with WFIKKN2, leading to inhibit its activity. Interacts with FSTL3. Synthesized as large precursor molecule that undergoes proteolytic cleavage to generate an N-terminal propeptide and a disulfide linked C-terminal dimer, which is the biologically active molecule. The circulating form consists of a latent complex of the C-terminal dimer and other proteins, including its propeptide, which maintain the C-terminal dimer in a latent, inactive state. Ligand activation requires additional cleavage of the prodomain by a tolloid-like metalloproteinase.

Its subcellular location is the secreted. Acts specifically as a negative regulator of skeletal muscle growth. The sequence is that of Growth/differentiation factor 8 (MSTN) from Taurotragus derbianus (Giant eland).